The sequence spans 387 residues: GTPase Obg (387 aa).

The 159-residue stretch at 1–159 (MKFVDEAIIR…RSLKLELLLL (159 aa)) folds into the Obg domain. One can recognise an OBG-type G domain in the interval 160–333 (ADVGLLGMPN…LALKLLDFID (174 aa)). GTP is bound by residues 166-173 (GMPNAGKS), 191-195 (FTTLV), 213-216 (DIPG), 283-286 (NKAD), and 314-316 (SAY). Positions 173 and 193 each coordinate Mg(2+).

This sequence belongs to the TRAFAC class OBG-HflX-like GTPase superfamily. OBG GTPase family. As to quaternary structure, monomer. Mg(2+) serves as cofactor.

It is found in the cytoplasm. An essential GTPase which binds GTP, GDP and possibly (p)ppGpp with moderate affinity, with high nucleotide exchange rates and a fairly low GTP hydrolysis rate. Plays a role in control of the cell cycle, stress response, ribosome biogenesis and in those bacteria that undergo differentiation, in morphogenesis control. The sequence is that of GTPase Obg from Shewanella pealeana (strain ATCC 700345 / ANG-SQ1).